The chain runs to 108 residues: Movement protein TGB2 (108 aa).

The Cytoplasmic portion of the chain corresponds to M1–D8. The helical transmembrane segment at Y9–L29 threads the bilayer. The Lumenal portion of the chain corresponds to T30–P71. Residues A72 to L92 form a helical membrane-spanning segment. Topologically, residues R93–G108 are cytoplasmic.

Belongs to the Tymovirales TGBp2 protein family.

The protein localises to the host endoplasmic reticulum membrane. Plays a role in viral cell-to-cell propagation, by facilitating genome transport to neighboring plant cells through plasmosdesmata,. In Lily virus X, this protein is Movement protein TGB2.